Here is a 67-residue protein sequence, read N- to C-terminus: DNA-directed RNA polymerase subunit Rpo10 (67 aa).

Zn(2+)-binding residues include cysteine 7, cysteine 10, cysteine 44, and cysteine 45.

Belongs to the archaeal Rpo10/eukaryotic RPB10 RNA polymerase subunit family. Part of the RNA polymerase complex. Zn(2+) is required as a cofactor.

Its subcellular location is the cytoplasm. The enzyme catalyses RNA(n) + a ribonucleoside 5'-triphosphate = RNA(n+1) + diphosphate. Functionally, DNA-dependent RNA polymerase (RNAP) catalyzes the transcription of DNA into RNA using the four ribonucleoside triphosphates as substrates. The chain is DNA-directed RNA polymerase subunit Rpo10 from Caldivirga maquilingensis (strain ATCC 700844 / DSM 13496 / JCM 10307 / IC-167).